The following is a 387-amino-acid chain: GTPase Obg (387 aa).

One can recognise an Obg domain in the interval 1 to 159 (MKFVDEAIIR…RSLKLELLLL (159 aa)). The region spanning 160–333 (ADVGLLGMPN…LAVKLLDFIA (174 aa)) is the OBG-type G domain. GTP contacts are provided by residues 166-173 (GMPNAGKS), 191-195 (FTTLV), 213-216 (DIPG), 283-286 (NKAD), and 314-316 (SAY). Positions 173 and 193 each coordinate Mg(2+).

This sequence belongs to the TRAFAC class OBG-HflX-like GTPase superfamily. OBG GTPase family. As to quaternary structure, monomer. Mg(2+) is required as a cofactor.

The protein resides in the cytoplasm. Functionally, an essential GTPase which binds GTP, GDP and possibly (p)ppGpp with moderate affinity, with high nucleotide exchange rates and a fairly low GTP hydrolysis rate. Plays a role in control of the cell cycle, stress response, ribosome biogenesis and in those bacteria that undergo differentiation, in morphogenesis control. The sequence is that of GTPase Obg from Shewanella halifaxensis (strain HAW-EB4).